The chain runs to 223 residues: Phosphoribosylformylglycinamidine synthase subunit PurQ (223 aa).

A Glutamine amidotransferase type-1 domain is found at 4–223; that stretch reads FAVIVFPGTN…FKSIVEWMKK (220 aa). Residue cysteine 85 is the Nucleophile of the active site. Active-site residues include histidine 196 and glutamate 198.

As to quaternary structure, part of the FGAM synthase complex composed of 1 PurL, 1 PurQ and 2 PurS subunits.

It is found in the cytoplasm. The catalysed reaction is N(2)-formyl-N(1)-(5-phospho-beta-D-ribosyl)glycinamide + L-glutamine + ATP + H2O = 2-formamido-N(1)-(5-O-phospho-beta-D-ribosyl)acetamidine + L-glutamate + ADP + phosphate + H(+). The enzyme catalyses L-glutamine + H2O = L-glutamate + NH4(+). It participates in purine metabolism; IMP biosynthesis via de novo pathway; 5-amino-1-(5-phospho-D-ribosyl)imidazole from N(2)-formyl-N(1)-(5-phospho-D-ribosyl)glycinamide: step 1/2. Part of the phosphoribosylformylglycinamidine synthase complex involved in the purines biosynthetic pathway. Catalyzes the ATP-dependent conversion of formylglycinamide ribonucleotide (FGAR) and glutamine to yield formylglycinamidine ribonucleotide (FGAM) and glutamate. The FGAM synthase complex is composed of three subunits. PurQ produces an ammonia molecule by converting glutamine to glutamate. PurL transfers the ammonia molecule to FGAR to form FGAM in an ATP-dependent manner. PurS interacts with PurQ and PurL and is thought to assist in the transfer of the ammonia molecule from PurQ to PurL. This is Phosphoribosylformylglycinamidine synthase subunit PurQ from Pyrococcus horikoshii (strain ATCC 700860 / DSM 12428 / JCM 9974 / NBRC 100139 / OT-3).